The following is a 166-amino-acid chain: Phosphopantetheine adenylyltransferase (166 aa).

Serine 11 contacts substrate. ATP is bound by residues 11 to 12 and histidine 19; that span reads SF. Substrate is bound by residues lysine 43, leucine 75, and arginine 89. ATP-binding positions include 90 to 92, glutamate 100, and 125 to 131; these read GLR and YGYLSSS.

Belongs to the bacterial CoaD family. As to quaternary structure, homohexamer. Requires Mg(2+) as cofactor.

It is found in the cytoplasm. The enzyme catalyses (R)-4'-phosphopantetheine + ATP + H(+) = 3'-dephospho-CoA + diphosphate. The protein operates within cofactor biosynthesis; coenzyme A biosynthesis; CoA from (R)-pantothenate: step 4/5. Functionally, reversibly transfers an adenylyl group from ATP to 4'-phosphopantetheine, yielding dephospho-CoA (dPCoA) and pyrophosphate. This is Phosphopantetheine adenylyltransferase from Syntrophotalea carbinolica (strain DSM 2380 / NBRC 103641 / GraBd1) (Pelobacter carbinolicus).